Consider the following 607-residue polypeptide: Large ribosomal subunit assembly factor BipA (607 aa).

One can recognise a tr-type G domain in the interval 3–198; sequence ENLRNIAIIA…AIVDHVPAPD (196 aa). Residues 15-20 and 128-131 each bind GTP; these read DHGKTT and NKVD. The segment at 481–607 is C-terminal domain (CTD), required but not sufficient to bind 70S or 30S ribosomes; sequence GQRQNGVLIS…RRANRGQKEE (127 aa).

Belongs to the TRAFAC class translation factor GTPase superfamily. Classic translation factor GTPase family. BipA subfamily. Monomer.

Its subcellular location is the cytoplasm. It catalyses the reaction GTP + H2O = GDP + phosphate + H(+). With respect to regulation, ribosome-associated GTPase is not affected by low levels of ppGpp, &gt;40 uM ppGpp and &gt;50 uM GDP inhibit GTPase. The C-terminus (residues 387-607 or 481-607) inhibits GTPase activity, in its absence kcat increases, but GTPase is no longer stimulated by 70S ribosome or 30S or 50S subunits. A 50S ribosomal subunit assembly protein with GTPase activity, required for 50S subunit assembly at low temperatures, may also play a role in translation. Binds GTP and analogs. Binds the 70S ribosome between the 30S and 50S subunits, in a similar position as ribosome-bound EF-G; it contacts a number of ribosomal proteins, both rRNAs and the A-site tRNA. A ribosome-stimulated GTPase, GTPase activity increases 4 fold in the presence of 70S ribosomes. Binds 70S ribosomes in the presence of GTP or its non-hydrolyzable analog GMPPNP; in the presence of ppGpp or under stress conditions it binds to 30S ribosomal subunits. The polypeptide is Large ribosomal subunit assembly factor BipA (Salmonella typhimurium (strain LT2 / SGSC1412 / ATCC 700720)).